The primary structure comprises 224 residues: 7-cyano-7-deazaguanine synthase (224 aa).

12–22 (LSGGLDSSTVT) lines the ATP pocket. 4 residues coordinate Zn(2+): C193, C201, C204, and C207.

The protein belongs to the QueC family. The cofactor is Zn(2+).

It catalyses the reaction 7-carboxy-7-deazaguanine + NH4(+) + ATP = 7-cyano-7-deazaguanine + ADP + phosphate + H2O + H(+). Its pathway is purine metabolism; 7-cyano-7-deazaguanine biosynthesis. Functionally, catalyzes the ATP-dependent conversion of 7-carboxy-7-deazaguanine (CDG) to 7-cyano-7-deazaguanine (preQ(0)). The chain is 7-cyano-7-deazaguanine synthase from Prochlorococcus marinus (strain MIT 9515).